A 596-amino-acid chain; its full sequence is Pentatricopeptide repeat-containing protein At5g38730 (596 aa).

PPR repeat units lie at residues 132 to 166 (VSHV…GLKP), 167 to 201 (HLQA…GVVA), 202 to 236 (NIHV…GVFP), 237 to 271 (DIFT…GVAP), 272 to 302 (NIVT…IKDD), 306 to 340 (NHVT…GFSP), 341 to 375 (GVVT…KIEP), 376 to 410 (DNIT…GLKL), 411 to 445 (DMYS…GFSP), 446 to 480 (GYAT…GLCA), 481 to 515 (DVAL…GLVG), and 516 to 550 (DSVI…RLMV).

This sequence belongs to the PPR family. P subfamily.

This is Pentatricopeptide repeat-containing protein At5g38730 from Arabidopsis thaliana (Mouse-ear cress).